Here is a 255-residue protein sequence, read N- to C-terminus: tRNA pseudouridine synthase A (255 aa).

Asp60 (nucleophile) is an active-site residue. Residue Tyr118 coordinates substrate.

The protein belongs to the tRNA pseudouridine synthase TruA family. Homodimer.

The catalysed reaction is uridine(38/39/40) in tRNA = pseudouridine(38/39/40) in tRNA. Its function is as follows. Formation of pseudouridine at positions 38, 39 and 40 in the anticodon stem and loop of transfer RNAs. This chain is tRNA pseudouridine synthase A, found in Leuconostoc mesenteroides subsp. mesenteroides (strain ATCC 8293 / DSM 20343 / BCRC 11652 / CCM 1803 / JCM 6124 / NCDO 523 / NBRC 100496 / NCIMB 8023 / NCTC 12954 / NRRL B-1118 / 37Y).